The sequence spans 715 residues: Methylmalonyl-CoA mutase large subunit (715 aa).

The (R)-methylmalonyl-CoA site is built by Y70, M73, R77, T80, R82, Y84, and S109. 2 residues coordinate cob(II)alamin: F112 and A134. (R)-methylmalonyl-CoA-binding residues include T190 and Q192. The cob(II)alamin site is built by V201 and R202. The (R)-methylmalonyl-CoA site is built by R202, H239, R278, and S280. 11 residues coordinate cob(II)alamin: G328, E365, A368, G599, H600, D601, R602, S645, L647, G676, and T699. Residues 587 to 715 (QPRIMIAKMG…AKVLEILLEE (129 aa)) enclose the B12-binding domain.

The protein belongs to the methylmalonyl-CoA mutase family. In terms of assembly, heterodimer of an alpha and a beta chain. Adenosylcob(III)alamin is required as a cofactor.

The enzyme catalyses (R)-methylmalonyl-CoA = succinyl-CoA. Its function is as follows. Catalyzes the isomerization of succinyl-CoA to methylmalonyl-CoA during synthesis of propionate from tricarboxylic acid-cycle intermediates. This Porphyromonas gingivalis (strain ATCC BAA-308 / W83) protein is Methylmalonyl-CoA mutase large subunit (mutB).